A 399-amino-acid chain; its full sequence is Probable 2,3-bisphosphoglycerate-independent phosphoglycerate mutase (399 aa).

It belongs to the BPG-independent phosphoglycerate mutase family. A-PGAM subfamily.

It catalyses the reaction (2R)-2-phosphoglycerate = (2R)-3-phosphoglycerate. It functions in the pathway carbohydrate degradation; glycolysis; pyruvate from D-glyceraldehyde 3-phosphate: step 3/5. In terms of biological role, catalyzes the interconversion of 2-phosphoglycerate and 3-phosphoglycerate. This Geobacter sulfurreducens (strain ATCC 51573 / DSM 12127 / PCA) protein is Probable 2,3-bisphosphoglycerate-independent phosphoglycerate mutase.